We begin with the raw amino-acid sequence, 381 residues long: E3 ubiquitin-protein ligase RNF13 (381 aa).

An N-terminal signal peptide occupies residues 1-34 (MLLSIGMLMLSATQIYTIVTVQLFAFLNLLPVEA). The Lumenal portion of the chain corresponds to 35–182 (DILAYNFENG…IPEFSLPLEY (148 aa)). Residues 64–160 (LKGFLINSKP…GEASANSLKE (97 aa)) form the PA domain. A glycan (N-linked (GlcNAc...) asparagine) is linked at N88. Residues 183–203 (YLIPFLIIVGICLILIVIFMI) traverse the membrane as a helical segment. At 204 to 381 (TKFVQDRHRA…ERDYRVTNTV (178 aa)) the chain is on the cytoplasmic side. The segment at 240-282 (CAICLDEYEDGDKLRILPCSHAYHCKCVDPWLTKTKKTCPVCK) adopts an RING-type; atypical zinc-finger fold. The tract at residues 285-381 (VVPSQGDSDS…ERDYRVTNTV (97 aa)) is disordered. Acidic residues-rich tracts occupy residues 292–305 (SDSE…ENEV) and 339–353 (SEYE…DSSD). A compositionally biased stretch (basic and acidic residues) spans 370-381 (NDERDYRVTNTV).

Widely expressed (at protein level). Lowest levels in the liver, moderate levels in the heart, intestine and spleen, and high levels in skeletal muscle, kidney, proventriculus and brain. Also expressed in inner ear after noise exposure.

Its subcellular location is the endoplasmic reticulum membrane. The protein resides in the late endosome membrane. It localises to the lysosome membrane. It is found in the nucleus inner membrane. It catalyses the reaction S-ubiquitinyl-[E2 ubiquitin-conjugating enzyme]-L-cysteine + [acceptor protein]-L-lysine = [E2 ubiquitin-conjugating enzyme]-L-cysteine + N(6)-ubiquitinyl-[acceptor protein]-L-lysine.. Its pathway is protein modification; protein ubiquitination. Functionally, E3 ubiquitin-protein ligase that regulates cell proliferation. Involved in apoptosis regulation. Mediates ER stress-induced activation of JNK signaling pathway and apoptosis by promoting ERN1 activation and splicing of XBP1 mRNA. In Gallus gallus (Chicken), this protein is E3 ubiquitin-protein ligase RNF13.